The chain runs to 145 residues: 3-dehydroquinate dehydratase (145 aa).

Tyrosine 22 serves as the catalytic Proton acceptor. Substrate contacts are provided by asparagine 74, histidine 80, and aspartate 87. Histidine 100 serves as the catalytic Proton donor. Residues 101-102 (IS) and arginine 111 each bind substrate.

This sequence belongs to the type-II 3-dehydroquinase family. As to quaternary structure, homododecamer.

The catalysed reaction is 3-dehydroquinate = 3-dehydroshikimate + H2O. It functions in the pathway metabolic intermediate biosynthesis; chorismate biosynthesis; chorismate from D-erythrose 4-phosphate and phosphoenolpyruvate: step 3/7. Catalyzes a trans-dehydration via an enolate intermediate. The sequence is that of 3-dehydroquinate dehydratase from Lachnoclostridium phytofermentans (strain ATCC 700394 / DSM 18823 / ISDg) (Clostridium phytofermentans).